A 794-amino-acid polypeptide reads, in one-letter code: Striatin-3 (794 aa).

Residue methionine 1 is modified to N-acetylmethionine. Gly residues predominate over residues 1 to 12 (MDELAGGGGGQG). The interval 1–59 (MDELAGGGGGQGMAVPPRPQQGPGGNLSLPPGANGAPGGGGPPAAETAGPPAGPELSRP) is disordered. Positions 70–78 (YIQHEWARF) are caveolin-binding. Residues 76-135 (ARFEMERAHWEVERAELQARIAFLQGERKGQENLKKDLVRRIKMLEYALKQERAKYHKLK) adopt a coiled-coil conformation. Phosphothreonine is present on threonine 149. A calmodulin-binding region spans residues 164–181 (QNSQLTWKQGRQLLRQYL). Residues serine 200, serine 212, serine 227, serine 255, and serine 332 each carry the phosphoserine modification. A disordered region spans residues 309 to 339 (EDGEGAGEARSSGDGTEWDKDDLSPTAEVWD). WD repeat units lie at residues 475 to 514 (SHFD…PAKK), 528 to 567 (AHIG…VDPY), 581 to 620 (AHTD…PCIC), 676 to 715 (QSSN…MIHS), 718 to 757 (AHLD…CVQE), and 764 to 794 (KLDE…KVFV).

The protein belongs to the WD repeat striatin family. As to quaternary structure, tetramerizes. Part of the core of STRIPAK complexes composed of PP2A catalytic and scaffolding subunits, the striatins (PP2A regulatory subunits), the striatin-associated proteins MOB4, STRIP1 and STRIP2, PDCD10 and members of the STE20 kinases, such as STK24 and STK26. The STRIPAK complex can be extended by adapter proteins such as SLMAP:SIKE1 or CTTNBP2NL. Interacts with CDC42BPB.

It localises to the cytoplasm. Its subcellular location is the membrane. Calmodulin-binding scaffolding protein which is the center of the striatin-interacting phosphatase and kinase (STRIPAK) complexes. STRIPAK complexes have critical roles in protein (de)phosphorylation and are regulators of multiple signaling pathways including Hippo, MAPK, nuclear receptor and cytoskeleton remodeling. Different types of STRIPAK complexes are involved in a variety of biological processes such as cell growth, differentiation, apoptosis, metabolism and immune regulation. The sequence is that of Striatin-3 (Strn3) from Rattus norvegicus (Rat).